A 325-amino-acid polypeptide reads, in one-letter code: Myo-inositol dehydrogenase Hyg17 (325 aa).

It belongs to the Gfo/Idh/MocA family.

The enzyme catalyses myo-inositol + NAD(+) = myo-inosose-5 + NADH + H(+). Its pathway is antibiotic biosynthesis. Its function is as follows. Dehydrogenase involved in the biosynthesis of the aminocyclitol moiety of hygromycin A, a broad-spectrum antibiotic. Catalyzes the NAD(+)-dependent oxidation of myo-inositol to myo-inosose-5 (neo-inosose). Shows reduced activity with scyllo-inositol, minimal activity with L-chiro-inositol and no activity with D-glucose, D-chiro-inositol, epi-inositol, muco-inositol and allo-inositol. Is specific for NAD(+) and cannot use NADP(+). The chain is Myo-inositol dehydrogenase Hyg17 from Streptomyces leeuwenhoekii.